A 110-amino-acid chain; its full sequence is UPF0060 membrane protein Pmen_1247 (110 aa).

4 helical membrane passes run 5–25 (LWFL…WMWL), 31–51 (AWWI…LTRV), 59–79 (AYAA…ALIE), and 84–104 (MLSD…ILFA).

It belongs to the UPF0060 family.

It is found in the cell inner membrane. The polypeptide is UPF0060 membrane protein Pmen_1247 (Ectopseudomonas mendocina (strain ymp) (Pseudomonas mendocina)).